Consider the following 744-residue polypeptide: Catalase-peroxidase (744 aa).

A signal peptide spans 1–22; sequence MSPRARRCTDRCARMSERSMNA. A cross-link (tryptophyl-tyrosyl-methioninium (Trp-Tyr) (with M-260)) is located at residues 114–234; it reads WHSAGTYRLA…LGATEMGLIY (121 aa). Catalysis depends on H115, which acts as the Proton acceptor. Residues 234 to 260 constitute a cross-link (tryptophyl-tyrosyl-methioninium (Tyr-Met) (with W-114)); it reads YVNPEGPDRNGDPISAAKFIRETFARM. Residue H275 participates in heme b binding.

This sequence belongs to the peroxidase family. Peroxidase/catalase subfamily. As to quaternary structure, homodimer or homotetramer. Heme b serves as cofactor. In terms of processing, formation of the three residue Trp-Tyr-Met cross-link is important for the catalase, but not the peroxidase activity of the enzyme.

The enzyme catalyses H2O2 + AH2 = A + 2 H2O. It catalyses the reaction 2 H2O2 = O2 + 2 H2O. In terms of biological role, bifunctional enzyme with both catalase and broad-spectrum peroxidase activity. The chain is Catalase-peroxidase from Azorhizobium caulinodans (strain ATCC 43989 / DSM 5975 / JCM 20966 / LMG 6465 / NBRC 14845 / NCIMB 13405 / ORS 571).